The primary structure comprises 86 residues: Large ribosomal subunit protein bL27 (86 aa).

Residues 1–21 (MAHKKGGGSSRNGRDSESKRL) are disordered.

It belongs to the bacterial ribosomal protein bL27 family.

The chain is Large ribosomal subunit protein bL27 from Rubrobacter xylanophilus (strain DSM 9941 / JCM 11954 / NBRC 16129 / PRD-1).